A 184-amino-acid chain; its full sequence is Photosystem I assembly protein Ycf4 (184 aa).

Transmembrane regions (helical) follow at residues 19–39 (ISNF…LLVG) and 57–77 (IIFF…LFIS).

It belongs to the Ycf4 family.

The protein resides in the plastid. Its subcellular location is the chloroplast thylakoid membrane. Functionally, seems to be required for the assembly of the photosystem I complex. This chain is Photosystem I assembly protein Ycf4, found in Drimys granadensis.